We begin with the raw amino-acid sequence, 103 residues long: Small ribosomal subunit protein uS10 (103 aa).

The protein belongs to the universal ribosomal protein uS10 family. Part of the 30S ribosomal subunit.

Its function is as follows. Involved in the binding of tRNA to the ribosomes. This chain is Small ribosomal subunit protein uS10, found in Hahella chejuensis (strain KCTC 2396).